Reading from the N-terminus, the 378-residue chain is Spermidine/putrescine import ATP-binding protein PotA (378 aa).

The 231-residue stretch at 18–248 (VQLAGIRKCF…PKNLFVAGFI (231 aa)) folds into the ABC transporter domain. 50-57 (GPSGCGKT) contributes to the ATP binding site.

Belongs to the ABC transporter superfamily. Spermidine/putrescine importer (TC 3.A.1.11.1) family. The complex is composed of two ATP-binding proteins (PotA), two transmembrane proteins (PotB and PotC) and a solute-binding protein (PotD).

The protein localises to the cell inner membrane. The enzyme catalyses ATP + H2O + polyamine-[polyamine-binding protein]Side 1 = ADP + phosphate + polyamineSide 2 + [polyamine-binding protein]Side 1.. Its function is as follows. Part of the ABC transporter complex PotABCD involved in spermidine/putrescine import. Responsible for energy coupling to the transport system. The polypeptide is Spermidine/putrescine import ATP-binding protein PotA (Escherichia coli O1:K1 / APEC).